The sequence spans 437 residues: Amino-acid acetyltransferase (437 aa).

The 141-residue stretch at 289-429 (ENIRLATSFD…EHYNYQRMSK (141 aa)) folds into the N-acetyltransferase domain.

It belongs to the acetyltransferase family. ArgA subfamily.

The protein localises to the cytoplasm. It carries out the reaction L-glutamate + acetyl-CoA = N-acetyl-L-glutamate + CoA + H(+). The protein operates within amino-acid biosynthesis; L-arginine biosynthesis; N(2)-acetyl-L-ornithine from L-glutamate: step 1/4. In Actinobacillus pleuropneumoniae serotype 5b (strain L20), this protein is Amino-acid acetyltransferase.